Reading from the N-terminus, the 128-residue chain is Ribonuclease P protein component (128 aa).

This sequence belongs to the RnpA family. Consists of a catalytic RNA component (M1 or rnpB) and a protein subunit.

The enzyme catalyses Endonucleolytic cleavage of RNA, removing 5'-extranucleotides from tRNA precursor.. Its function is as follows. RNaseP catalyzes the removal of the 5'-leader sequence from pre-tRNA to produce the mature 5'-terminus. It can also cleave other RNA substrates such as 4.5S RNA. The protein component plays an auxiliary but essential role in vivo by binding to the 5'-leader sequence and broadening the substrate specificity of the ribozyme. The chain is Ribonuclease P protein component from Prochlorococcus marinus (strain MIT 9313).